A 734-amino-acid chain; its full sequence is Photosystem I P700 chlorophyll a apoprotein A2 (734 aa).

Transmembrane regions (helical) follow at residues 46-69, 135-158, 175-199, 273-291, 330-353, 369-395, 417-439, and 517-535; these read IFAS…FHVA, LYTG…LHLQ, LNHH…HVAI, IAHH…GHMY, LHFQ…QHMY, AALY…IFLI, AIIS…LYVH, and FLVH…LILV. Residues cysteine 559 and cysteine 568 each coordinate [4Fe-4S] cluster. The next 2 helical transmembrane spans lie at 575 to 596 and 643 to 665; these read AFYS…YWHW and LSVW…MFLI. Chlorophyll a-binding residues include histidine 654, methionine 662, and tyrosine 670. Position 671 (tryptophan 671) interacts with phylloquinone. The chain crosses the membrane as a helical span at residues 707 to 727; it reads LVGLAHFSVGYIFTYAAFLIA.

This sequence belongs to the PsaA/PsaB family. As to quaternary structure, the PsaA/B heterodimer binds the P700 chlorophyll special pair and subsequent electron acceptors. PSI consists of a core antenna complex that captures photons, and an electron transfer chain that converts photonic excitation into a charge separation. The eukaryotic PSI reaction center is composed of at least 11 subunits. It depends on P700 is a chlorophyll a/chlorophyll a' dimer, A0 is one or more chlorophyll a, A1 is one or both phylloquinones and FX is a shared 4Fe-4S iron-sulfur center. as a cofactor.

It is found in the plastid. The protein resides in the chloroplast thylakoid membrane. The catalysed reaction is reduced [plastocyanin] + hnu + oxidized [2Fe-2S]-[ferredoxin] = oxidized [plastocyanin] + reduced [2Fe-2S]-[ferredoxin]. PsaA and PsaB bind P700, the primary electron donor of photosystem I (PSI), as well as the electron acceptors A0, A1 and FX. PSI is a plastocyanin-ferredoxin oxidoreductase, converting photonic excitation into a charge separation, which transfers an electron from the donor P700 chlorophyll pair to the spectroscopically characterized acceptors A0, A1, FX, FA and FB in turn. Oxidized P700 is reduced on the lumenal side of the thylakoid membrane by plastocyanin. The protein is Photosystem I P700 chlorophyll a apoprotein A2 of Huperzia lucidula (Shining clubmoss).